A 195-amino-acid chain; its full sequence is uncharacterized protein (195 aa).

The Nudix hydrolase domain occupies 34-165; it reads SHHAAVLIPI…WLDIHRGGVN (132 aa). Residues 72–94 carry the Nudix box motif; it reads GKADPQDSSLIETALREAEEEVA. 2 residues coordinate Mg(2+): Glu-88 and Glu-92.

This sequence belongs to the Nudix hydrolase family. PCD1 subfamily. It depends on Mn(2+) as a cofactor. Mg(2+) serves as cofactor.

In terms of biological role, probably mediates the hydrolysis of some nucleoside diphosphate derivatives. This is an uncharacterized protein from Yersinia enterocolitica serotype O:8 / biotype 1B (strain NCTC 13174 / 8081).